Here is a 989-residue protein sequence, read N- to C-terminus: Bifunctional glutamine synthetase adenylyltransferase/adenylyl-removing enzyme (989 aa).

The tract at residues 1–474 (MNSSAIDADI…HYGKLFEGDP (474 aa)) is adenylyl removase. The tract at residues 480–989 (LPIDYAGGPD…FNRLIGGDSA (510 aa)) is adenylyl transferase.

It belongs to the GlnE family. The cofactor is Mg(2+).

It catalyses the reaction [glutamine synthetase]-O(4)-(5'-adenylyl)-L-tyrosine + phosphate = [glutamine synthetase]-L-tyrosine + ADP. The enzyme catalyses [glutamine synthetase]-L-tyrosine + ATP = [glutamine synthetase]-O(4)-(5'-adenylyl)-L-tyrosine + diphosphate. Functionally, involved in the regulation of glutamine synthetase GlnA, a key enzyme in the process to assimilate ammonia. When cellular nitrogen levels are high, the C-terminal adenylyl transferase (AT) inactivates GlnA by covalent transfer of an adenylyl group from ATP to specific tyrosine residue of GlnA, thus reducing its activity. Conversely, when nitrogen levels are low, the N-terminal adenylyl removase (AR) activates GlnA by removing the adenylyl group by phosphorolysis, increasing its activity. The regulatory region of GlnE binds the signal transduction protein PII (GlnB) which indicates the nitrogen status of the cell. The sequence is that of Bifunctional glutamine synthetase adenylyltransferase/adenylyl-removing enzyme from Rhodopseudomonas palustris (strain BisB5).